Here is a 205-residue protein sequence, read N- to C-terminus: Large ribosomal subunit protein bL25 (205 aa).

Residues glutamine 184–alanine 205 are disordered. A compositionally biased stretch (low complexity) spans alanine 186–alanine 205.

The protein belongs to the bacterial ribosomal protein bL25 family. CTC subfamily. In terms of assembly, part of the 50S ribosomal subunit; part of the 5S rRNA/L5/L18/L25 subcomplex. Contacts the 5S rRNA. Binds to the 5S rRNA independently of L5 and L18.

In terms of biological role, this is one of the proteins that binds to the 5S RNA in the ribosome where it forms part of the central protuberance. This chain is Large ribosomal subunit protein bL25, found in Cupriavidus necator (strain ATCC 17699 / DSM 428 / KCTC 22496 / NCIMB 10442 / H16 / Stanier 337) (Ralstonia eutropha).